Reading from the N-terminus, the 556-residue chain is Formate--tetrahydrofolate ligase 1 (556 aa).

Thr65 to Ser72 contacts ATP.

The protein belongs to the formate--tetrahydrofolate ligase family.

The catalysed reaction is (6S)-5,6,7,8-tetrahydrofolate + formate + ATP = (6R)-10-formyltetrahydrofolate + ADP + phosphate. It functions in the pathway one-carbon metabolism; tetrahydrofolate interconversion. The chain is Formate--tetrahydrofolate ligase 1 from Streptococcus pyogenes serotype M18 (strain MGAS8232).